The chain runs to 439 residues: MFDLPTVAPLDMEDSWVTFQAEGDQGQDSFSSSVNLDDSLTSLQWLQEFSILNANVGKTPSSSGDSHGYRHLSGAPCSPLAADPACLGMPHTPGKPISSSTSRASHLGLQPMEEIDYKTNPHVKPPYSYATLICMAMQASKKTKITLSAIYKWITDNFCYFRHADPTWQNSIRHNLSLNKCFIKVPREKDEPGKGGFWKIDPQYADRLMNGAMKKRRLPPVQIHPAFASAQAAASSNGNRASAWQMSVNSESHKLLKEFEEITSEQSWNALGEHGWNAISDGKSHKRKQPLPKRMFKAPRLSSSPMLSQEEQTELGSLKGDFDWEVIFDSSINGVNFSAFEDLEVTPPLSPVSRSVDLTVHGKHIDCPQQWYPMGQDQAVAQNSLDFDETFLATSFLQHPWEENRNDYLSNSANIEQLFDLNDAFPAELNDWPALGSYI.

The segment at residues lysine 124 to leucine 218 is a DNA-binding region (fork-head).

The protein belongs to the FOXJ1 family.

The protein resides in the nucleus. Functionally, key transcription factor required for motile ciliogenesis. Activates genes essential for motile cilia formation and function. This is Forkhead box protein J1-B (foxj1-b) from Xenopus laevis (African clawed frog).